The following is a 426-amino-acid chain: Protein arginine methyltransferase NDUFAF7 homolog, mitochondrial (426 aa).

It belongs to the NDUFAF7 family.

The protein localises to the mitochondrion. The enzyme catalyses L-arginyl-[protein] + 2 S-adenosyl-L-methionine = N(omega),N(omega)'-dimethyl-L-arginyl-[protein] + 2 S-adenosyl-L-homocysteine + 2 H(+). In terms of biological role, arginine methyltransferase involved in the assembly or stability of mitochondrial NADH:ubiquinone oxidoreductase complex (complex I). This chain is Protein arginine methyltransferase NDUFAF7 homolog, mitochondrial, found in Caenorhabditis elegans.